A 59-amino-acid polypeptide reads, in one-letter code: Protein translocase subunit SecE (59 aa).

Residues 39–59 (VMALFLGLIDALFVALLSFFF) form a helical membrane-spanning segment.

It belongs to the SecE/SEC61-gamma family. In terms of assembly, component of the Sec protein translocase complex. Heterotrimer consisting of SecY, SecE and SecG subunits. The heterotrimers can form oligomers, although 1 heterotrimer is thought to be able to translocate proteins. Interacts with the ribosome. Interacts with SecDF, and other proteins may be involved. Interacts with SecA.

Its subcellular location is the cell inner membrane. In terms of biological role, essential subunit of the Sec protein translocation channel SecYEG. Clamps together the 2 halves of SecY. May contact the channel plug during translocation. The protein is Protein translocase subunit SecE of Treponema pallidum (strain Nichols).